Here is a 125-residue protein sequence, read N- to C-terminus: Glycine cleavage system H protein (125 aa).

One can recognise a Lipoyl-binding domain in the interval 22-104; the sequence is SYVIGITDFA…YDTGWILKLE (83 aa). N6-lipoyllysine is present on Lys63.

Belongs to the GcvH family. As to quaternary structure, the glycine cleavage system is composed of four proteins: P, T, L and H. (R)-lipoate serves as cofactor.

Functionally, the glycine cleavage system catalyzes the degradation of glycine. The H protein shuttles the methylamine group of glycine from the P protein to the T protein. Its function is as follows. Is also involved in protein lipoylation via its role as an octanoyl/lipoyl carrier protein intermediate. The chain is Glycine cleavage system H protein from Listeria monocytogenes serotype 4b (strain CLIP80459).